The primary structure comprises 402 residues: Serine/threonine-protein phosphatase 4 regulatory subunit 2 (402 aa).

A disordered region spans residues 258–402 (NEDQDDENTG…FSKRNKASES (145 aa)). A compositionally biased stretch (polar residues) spans 266 to 277 (TGFSNQVINDNN). Acidic residues predominate over residues 278–319 (DSQEDDDEDSDYIEEDEGDEDEDDDDDEEEEEEEDGDEDEDE). Over residues 320-337 (DKHFDIKVEEEAVKEDAN) the composition is skewed to basic and acidic residues. Residues 345–358 (NVSNNSDDSSLQND) show a composition bias toward low complexity.

This sequence belongs to the PPP4R2 family. Regulatory subunit (R2) of the histone H2A phosphatase complex (HTP-C) consisting of PPH3, PSY2 and PSY4.

It localises to the nucleus. Regulatory subunit of the histone H2A phosphatase complex, which dephosphorylates H2AS128ph (gamma-H2A) that has been displaced from sites of DNA lesions in the double-stranded DNA break repair process. Dephosphorylation is necessary for efficient recovery from the DNA damage checkpoint. This is Serine/threonine-protein phosphatase 4 regulatory subunit 2 (PSY4) from Candida glabrata (strain ATCC 2001 / BCRC 20586 / JCM 3761 / NBRC 0622 / NRRL Y-65 / CBS 138) (Yeast).